Consider the following 75-residue polypeptide: Antitoxin MT0312 (75 aa).

In terms of biological role, antitoxin component of a type II toxin-antitoxin (TA) system. In Mycobacterium tuberculosis (strain CDC 1551 / Oshkosh), this protein is Antitoxin MT0312.